A 265-amino-acid polypeptide reads, in one-letter code: uncharacterized protein (265 aa).

The tract at residues 122–145 is disordered; that stretch reads THYRDNGQTPPRDTRPHGGISLGG.

This is an uncharacterized protein from Zymomonas mobilis subsp. mobilis (strain ATCC 31821 / ZM4 / CP4).